A 361-amino-acid polypeptide reads, in one-letter code: tRNA N6-adenosine threonylcarbamoyltransferase (361 aa).

Positions 110 and 114 each coordinate Fe cation. Residues 132–136, Asp165, Gly178, Asp182, and Asn284 each bind substrate; that span reads LVSGG. Fe cation is bound at residue Asp312.

This sequence belongs to the KAE1 / TsaD family. It depends on Fe(2+) as a cofactor.

It localises to the cytoplasm. The enzyme catalyses L-threonylcarbamoyladenylate + adenosine(37) in tRNA = N(6)-L-threonylcarbamoyladenosine(37) in tRNA + AMP + H(+). Functionally, required for the formation of a threonylcarbamoyl group on adenosine at position 37 (t(6)A37) in tRNAs that read codons beginning with adenine. Is involved in the transfer of the threonylcarbamoyl moiety of threonylcarbamoyl-AMP (TC-AMP) to the N6 group of A37, together with TsaE and TsaB. TsaD likely plays a direct catalytic role in this reaction. In Desulfovibrio desulfuricans (strain ATCC 27774 / DSM 6949 / MB), this protein is tRNA N6-adenosine threonylcarbamoyltransferase.